Consider the following 640-residue polypeptide: Cytochrome P450 monooxygenase cyp1 (640 aa).

Asn-71 is a glycosylation site (N-linked (GlcNAc...) asparagine). Residues 120 to 139 traverse the membrane as a helical segment; the sequence is LLVFLVGLFLGTIYLLYRYW. Asn-350 carries an N-linked (GlcNAc...) asparagine glycan. Residue Cys-572 coordinates heme.

It belongs to the cytochrome P450 family. It depends on heme as a cofactor.

It localises to the membrane. Its pathway is secondary metabolite biosynthesis. In terms of biological role, cytochrome P450 monooxygenase; part of the gene cluster that mediates the biosynthesis of the glycolipid biosurfactant ustilagic acid (UA). UA is a secreted cellobiose glycolipid that is toxic for many microorganisms and confers biocontrol activity to U.maydis. UA consists of 15,16-dihydroxypalmitic or 2,15,16-trihydroxypalmitic acid, which is O-glycosidically linked to cellobiose at its terminal hydroxyl group. In addition, the cellobiose moiety is acetylated and acylated with a short-chain hydroxy fatty acid. UA biosynthesis starts with omega-hydroxylation of palmitic acid catalyzed by the cytochrome P450 monooxygenase cyp1. Terminal hydroxylation of palmitic acid precedes subterminal hydroxylation catalyzed by the cytochrome P450 monooxygenase cyp2. Sequential glucosylation of the hydroxy fatty acid is probably catalyzed by the glycosyltransferase ugt1. The cellobiose lipid is further decorated by acetylation of the proximal glucose residue and by acylation with a short-chain beta-hydroxy fatty acid at the distal glucose residue. The acyltransferase uat1 may be a good candidate for catalyzing either acetylation or acylation of the cellobiose lipid. The fatty acid synthase fas2 may be involved in synthesis of the carbon backbone of the short-chain beta-hydroxy fatty acid esterified to the cellobiose disaccharide. The secreted UA consists of a mixture of both alpha-hydroxylated and non-hydroxylated glycolipids; therefore, alpha-hydroxylation of the long-chain fatty, catalyzed by the fatty acid hydroxylase ahd1, occurs late in UA biosynthesis and may be the last step before secretion. In Mycosarcoma maydis (Corn smut fungus), this protein is Cytochrome P450 monooxygenase cyp1.